A 392-amino-acid polypeptide reads, in one-letter code: Bifunctional enzyme IspD/IspF (392 aa).

2 2-C-methyl-D-erythritol 4-phosphate cytidylyltransferase regions span residues Met-1–Thr-234 and Met-1–Ala-235. The segment at Ala-235–Thr-392 is 2-C-methyl-D-erythritol 2,4-cyclodiphosphate synthase. A divalent metal cation contacts are provided by Asp-241 and His-243. 4-CDP-2-C-methyl-D-erythritol 2-phosphate is bound by residues Asp-241–His-243 and His-267–Ser-268. An a divalent metal cation-binding site is contributed by His-275. 4-CDP-2-C-methyl-D-erythritol 2-phosphate is bound by residues Asp-289–Gly-291, Thr-365–Glu-368, Phe-372, and Arg-375.

It in the N-terminal section; belongs to the IspD/TarI cytidylyltransferase family. IspD subfamily. This sequence in the C-terminal section; belongs to the IspF family. It depends on a divalent metal cation as a cofactor.

The catalysed reaction is 2-C-methyl-D-erythritol 4-phosphate + CTP + H(+) = 4-CDP-2-C-methyl-D-erythritol + diphosphate. It catalyses the reaction 4-CDP-2-C-methyl-D-erythritol 2-phosphate = 2-C-methyl-D-erythritol 2,4-cyclic diphosphate + CMP. The protein operates within isoprenoid biosynthesis; isopentenyl diphosphate biosynthesis via DXP pathway; isopentenyl diphosphate from 1-deoxy-D-xylulose 5-phosphate: step 2/6. It functions in the pathway isoprenoid biosynthesis; isopentenyl diphosphate biosynthesis via DXP pathway; isopentenyl diphosphate from 1-deoxy-D-xylulose 5-phosphate: step 4/6. Its function is as follows. Bifunctional enzyme that catalyzes the formation of 4-diphosphocytidyl-2-C-methyl-D-erythritol from CTP and 2-C-methyl-D-erythritol 4-phosphate (MEP) (IspD), and catalyzes the conversion of 4-diphosphocytidyl-2-C-methyl-D-erythritol 2-phosphate (CDP-ME2P) to 2-C-methyl-D-erythritol 2,4-cyclodiphosphate (ME-CPP) with a corresponding release of cytidine 5-monophosphate (CMP) (IspF). The sequence is that of Bifunctional enzyme IspD/IspF from Sphingopyxis alaskensis (strain DSM 13593 / LMG 18877 / RB2256) (Sphingomonas alaskensis).